The sequence spans 236 residues: Rho-related GTP-binding protein RhoV (236 aa).

The segment at 1 to 27 (MPPRELSEAEPPPLRAPTPPPRRRSAP) is disordered. Positions 10–20 (EPPPLRAPTPP) are enriched in pro residues. At S25 the chain carries Phosphoserine. GTP contacts are provided by residues 38–45 (GDGAVGKS), 85–89 (DTAGQ), and 143–146 (TQAD). C234 is lipidated: S-palmitoyl cysteine.

It belongs to the small GTPase superfamily. Rho family. Interacts with PAK2. Mg(2+) serves as cofactor. As to expression, highly expressed in pancreas, placenta, and fetal brain.

The protein resides in the cell membrane. The protein localises to the endosome membrane. Its function is as follows. Plays a role in the control of the actin cytoskeleton via activation of the JNK pathway. This Homo sapiens (Human) protein is Rho-related GTP-binding protein RhoV.